The sequence spans 464 residues: Phosphoglucosamine mutase (464 aa).

The active-site Phosphoserine intermediate is serine 112. The Mg(2+) site is built by serine 112, aspartate 252, aspartate 254, and aspartate 256. Serine 112 carries the phosphoserine modification.

The protein belongs to the phosphohexose mutase family. The cofactor is Mg(2+). Activated by phosphorylation.

The enzyme catalyses alpha-D-glucosamine 1-phosphate = D-glucosamine 6-phosphate. In terms of biological role, catalyzes the conversion of glucosamine-6-phosphate to glucosamine-1-phosphate. This chain is Phosphoglucosamine mutase, found in Synechococcus sp. (strain CC9902).